We begin with the raw amino-acid sequence, 82 residues long: Savignygrin (-) (82 aa).

An N-terminal signal peptide occupies residues 1–21 (MQANIFVFAFLLLSVAVAAYG). 3 cysteine pairs are disulfide-bonded: C26/C79, C34/C59, and C53/C75. The Cell attachment site motif lies at 35–37 (RGD).

Expressed in salivary glands.

Its subcellular location is the cytoplasmic vesicle. The protein resides in the secretory vesicle. The protein localises to the secreted. In terms of biological role, tick salivary platelet aggregation inhibitor that plays an important part in the anti-hemostatic strategy of ticks. Inhibits platelet aggregation induced by ADP (IC(50)=130 nM), collagen, the thrombin receptor-activating peptide, and epinephrine, although platelets are activated and their shape changed. Binding to platelets is similar for resting and activated platelets (Kd=50-70 nM). Acts by specifically binding to platelet membrane glycoprotein IIb-IIIa (ITGA2B/ITGB3) in a divalent metal ion dependent manner. In contrast to many disintegrins which only interacts with the beta-3 subunit, this protein interacts with the two subunits (alpha-IIb and beta-3). Also causes disaggregation of aggregated platelets without influencing the activated spherical shape associated with aggregated platelets and causes a decrease in the number of pseudopodia on the activated platelet surface. Does not show any inhibitory activity for the different serine proteases tested. The chain is Savignygrin (-) from Ornithodoros kalahariensis (Tick).